Consider the following 172-residue polypeptide: Small ribosomal subunit protein uS5 (172 aa).

One can recognise an S5 DRBM domain in the interval 17 to 80; it reads LREKMIAVNR…EEARRNMVKV (64 aa).

It belongs to the universal ribosomal protein uS5 family. Part of the 30S ribosomal subunit. Contacts proteins S4 and S8.

With S4 and S12 plays an important role in translational accuracy. Its function is as follows. Located at the back of the 30S subunit body where it stabilizes the conformation of the head with respect to the body. The polypeptide is Small ribosomal subunit protein uS5 (Verminephrobacter eiseniae (strain EF01-2)).